Here is a 71-residue protein sequence, read N- to C-terminus: Delta-actitoxin-Avd2b 4 (71 aa).

The signal sequence occupies residues 1-20 (MMNRLLVFLMLGAFMLVVSA). The propeptide occupies 21 to 41 (NDAYGDEPAFKDLNQGDESLG). 3 cysteine pairs are disulfide-bonded: cysteine 46–cysteine 61, cysteine 47–cysteine 55, and cysteine 49–cysteine 66.

The protein belongs to the sea anemone short toxin (type III) family.

It localises to the secreted. Its subcellular location is the nematocyst. In terms of biological role, voltage-gated sodium channel (Nav) inhibitor. 1 uM completely inhibits insect voltage-gated sodium channel inactivation (DmNav1 from D.melanogaster). This Anemonia viridis (Snakelocks anemone) protein is Delta-actitoxin-Avd2b 4.